Consider the following 405-residue polypeptide: Protochlorophyllide reductase A, chloroplastic (405 aa).

The transit peptide at 1 to 69 (MALQAASLVS…LRNNKAIIRA (69 aa)) directs the protein to the chloroplast.

It belongs to the short-chain dehydrogenases/reductases (SDR) family. POR subfamily. As to quaternary structure, forms large complexes including TOC33, pPORA and OEP161 during pPORA import into plastids at the plastid envelope membrane. Interacts with CPP1 during plastid import. As to expression, expressed in young seedlings. Not detected in leaves.

It localises to the plastid. The protein resides in the chloroplast. The enzyme catalyses chlorophyllide a + NADP(+) = protochlorophyllide a + NADPH + H(+). It functions in the pathway porphyrin-containing compound metabolism; chlorophyll biosynthesis. Its function is as follows. Phototransformation of protochlorophyllide (Pchlide) to chlorophyllide (Chlide). PORA may also function as a photoprotectant during the transitory stage from dark to light. Functions in skotomorphogenesis, photomorphogenesis and throughout the plant life under specific light conditions. The polypeptide is Protochlorophyllide reductase A, chloroplastic (PORA) (Arabidopsis thaliana (Mouse-ear cress)).